Reading from the N-terminus, the 398-residue chain is Na(+)/H(+) antiporter NhaA (398 aa).

A run of 11 helical transmembrane segments spans residues 14 to 34, 60 to 80, 96 to 116, 125 to 145, 155 to 175, 179 to 199, 214 to 234, 263 to 283, 292 to 312, 330 to 350, and 362 to 382; these read AAGVMLMMATVLALTFANWSV, LLLWINDGLMAIFFLLIGLEV, MLPLAAAVGGMVFPALFFLLF, VGWAIPAATDIAFAIGVLTLL, VFLLALAIIDDLGAILIIALF, QIFWPALGGAVLAVAALAYLN, IVLWVCILKCGVHATLAGVIV, FLIIPLFAFANAGIVLQGIVL, LGIAAGLLVGKPLGITLLSWL, IVAVSVLCGIGFTMSIFITLL, and YAKLGILLASGLAALLGYLAL.

It belongs to the NhaA Na(+)/H(+) (TC 2.A.33) antiporter family.

The protein resides in the cell inner membrane. The catalysed reaction is Na(+)(in) + 2 H(+)(out) = Na(+)(out) + 2 H(+)(in). In terms of biological role, na(+)/H(+) antiporter that extrudes sodium in exchange for external protons. The sequence is that of Na(+)/H(+) antiporter NhaA from Pectobacterium carotovorum subsp. carotovorum (strain PC1).